Here is a 65-residue protein sequence, read N- to C-terminus: Large ribosomal subunit protein bL31 (65 aa).

Residues Cys16, Cys18, Cys36, and Cys39 each contribute to the Zn(2+) site.

This sequence belongs to the bacterial ribosomal protein bL31 family. Type A subfamily. Part of the 50S ribosomal subunit. Zn(2+) serves as cofactor.

Its function is as follows. Binds the 23S rRNA. The protein is Large ribosomal subunit protein bL31 of Geobacter sulfurreducens (strain ATCC 51573 / DSM 12127 / PCA).